A 403-amino-acid chain; its full sequence is Tyrosine--tRNA ligase (403 aa).

Residues 42 to 51 (PTAPDLHLGH) carry the 'HIGH' region motif. Residues 226-230 (KMSKS) carry the 'KMSKS' region motif. Lys-229 contributes to the ATP binding site. The S4 RNA-binding domain occupies 336 to 396 (MPISAVLNKA…GKKAFGRITL (61 aa)).

This sequence belongs to the class-I aminoacyl-tRNA synthetase family. TyrS type 2 subfamily. As to quaternary structure, homodimer.

The protein localises to the cytoplasm. It catalyses the reaction tRNA(Tyr) + L-tyrosine + ATP = L-tyrosyl-tRNA(Tyr) + AMP + diphosphate + H(+). Functionally, catalyzes the attachment of tyrosine to tRNA(Tyr) in a two-step reaction: tyrosine is first activated by ATP to form Tyr-AMP and then transferred to the acceptor end of tRNA(Tyr). The protein is Tyrosine--tRNA ligase of Pseudomonas syringae pv. tomato (strain ATCC BAA-871 / DC3000).